A 379-amino-acid chain; its full sequence is Anomalous homeobox protein (379 aa).

Residues 135-196 constitute a DNA-binding region (homeobox); sequence PEGLKSRNFP…NYRRRQRALP (62 aa). Residues 195-283 are disordered; that stretch reads LPQHMKPAQQ…SKPLDVSGHP (89 aa). Residues 237–246 show a composition bias toward basic and acidic residues; sequence QWSEEREEKG.

It localises to the nucleus. This chain is Anomalous homeobox protein (ANHX), found in Homo sapiens (Human).